The primary structure comprises 156 residues: SsrA-binding protein (156 aa).

The protein belongs to the SmpB family.

The protein localises to the cytoplasm. In terms of biological role, required for rescue of stalled ribosomes mediated by trans-translation. Binds to transfer-messenger RNA (tmRNA), required for stable association of tmRNA with ribosomes. tmRNA and SmpB together mimic tRNA shape, replacing the anticodon stem-loop with SmpB. tmRNA is encoded by the ssrA gene; the 2 termini fold to resemble tRNA(Ala) and it encodes a 'tag peptide', a short internal open reading frame. During trans-translation Ala-aminoacylated tmRNA acts like a tRNA, entering the A-site of stalled ribosomes, displacing the stalled mRNA. The ribosome then switches to translate the ORF on the tmRNA; the nascent peptide is terminated with the 'tag peptide' encoded by the tmRNA and targeted for degradation. The ribosome is freed to recommence translation, which seems to be the essential function of trans-translation. The chain is SsrA-binding protein from Trichodesmium erythraeum (strain IMS101).